We begin with the raw amino-acid sequence, 405 residues long: Imidazolonepropionase (405 aa).

Positions 72 and 74 each coordinate Fe(3+). Residues His72 and His74 each contribute to the Zn(2+) site. 4-imidazolone-5-propanoate is bound by residues Arg81, Tyr144, and His177. Tyr144 serves as a coordination point for N-formimidoyl-L-glutamate. A Fe(3+)-binding site is contributed by His242. His242 is a binding site for Zn(2+). Residue Gln245 coordinates 4-imidazolone-5-propanoate. Residue Asp317 coordinates Fe(3+). Asp317 contacts Zn(2+). N-formimidoyl-L-glutamate contacts are provided by Asn319 and Gly321. Thr322 is a 4-imidazolone-5-propanoate binding site.

The protein belongs to the metallo-dependent hydrolases superfamily. HutI family. The cofactor is Zn(2+). Fe(3+) serves as cofactor.

Its subcellular location is the cytoplasm. The enzyme catalyses 4-imidazolone-5-propanoate + H2O = N-formimidoyl-L-glutamate. It functions in the pathway amino-acid degradation; L-histidine degradation into L-glutamate; N-formimidoyl-L-glutamate from L-histidine: step 3/3. Catalyzes the hydrolytic cleavage of the carbon-nitrogen bond in imidazolone-5-propanoate to yield N-formimidoyl-L-glutamate. It is the third step in the universal histidine degradation pathway. This is Imidazolonepropionase from Klebsiella pneumoniae subsp. pneumoniae (strain ATCC 700721 / MGH 78578).